The chain runs to 553 residues: uncharacterized protein (553 aa).

The signal sequence occupies residues 1 to 28 (MRYARHASRYSLFTLAVSAALLPGAGWA).

This is an uncharacterized protein from Pseudomonas aeruginosa (strain ATCC 15692 / DSM 22644 / CIP 104116 / JCM 14847 / LMG 12228 / 1C / PRS 101 / PAO1).